Reading from the N-terminus, the 213-residue chain is Phospho-2-dehydro-3-deoxyheptonate aldolase, Tyr-sensitive (213 aa).

The protein belongs to the class-I DAHP synthase family.

The catalysed reaction is D-erythrose 4-phosphate + phosphoenolpyruvate + H2O = 7-phospho-2-dehydro-3-deoxy-D-arabino-heptonate + phosphate. Its pathway is metabolic intermediate biosynthesis; chorismate biosynthesis; chorismate from D-erythrose 4-phosphate and phosphoenolpyruvate: step 1/7. In terms of biological role, stereospecific condensation of phosphoenolpyruvate (PEP) and D-erythrose-4-phosphate (E4P) giving rise to 3-deoxy-D-arabino-heptulosonate-7-phosphate (DAHP). The sequence is that of Phospho-2-dehydro-3-deoxyheptonate aldolase, Tyr-sensitive (aroF) from Enterobacter agglomerans (Erwinia herbicola).